An 816-amino-acid polypeptide reads, in one-letter code: H(+)/Cl(-) exchange transporter 5 (816 aa).

The segment at 1 to 26 (MAMWQGAMDNRGFQQGSFSSFQNSSS) is disordered. Topologically, residues 1–124 (MAMWQGAMDN…WALIHSVSDA (124 aa)) are cytoplasmic. Residues 12–25 (GFQQGSFSSFQNSS) are compositionally biased toward low complexity. Transmembrane regions (helical) follow at residues 125–162 (FSGWLLMLLIGLLSGSLAGLIDISAHWMTDLKEGICTG) and 208–231 (VNYFMYVLWALLFAFLAVSLVKVF). The Selectivity filter part_1 motif lies at 237–241 (GSGIP). S238 lines the chloride pocket. An intramembrane region (helical) is located at residues 240–247 (IPEIKTIL). The next 2 helical transmembrane spans lie at 256 to 275 (LGKWTLVIKTITLVLAVSSG) and 281 to 300 (EGPLVHVACCCGNILCHCFN). The short motif at 279-283 (GKEGP) is the Selectivity filter part_2 element. Intramembrane regions (helical) lie at residues 312-324 (VLSAAAAAGVSVA) and 328-336 (PIGGVLFSL). The next 5 membrane-spanning stretches (helical) occupy residues 348–366 (LWRSFFAALVAAFTLRSIN), 389–415 (LVPFILLGIFGGLWGALFIRTNIAWCR), 422–442 (LGKYPVIEVLVVTAITAILAF), 498–518 (MWQLALTLILKIVITIFTFGM), and 523–542 (GLFIPSMAVGAIAGRLLGVG). The Selectivity filter part_3 motif lies at 523–527 (GLFIP). Residue F525 participates in chloride binding. The helical intramembrane region spans 570–584 (GLYAMVGAAACLGGV). Positions 585–587 (TRM) form an intramembrane region, note=Loop between two helices. An intramembrane region (helical) is located at residues 588-599 (TVSLVVIMFELT). Residues 600–604 (GGLEY) constitute an intramembrane region (note=Loop between two helices). A helical membrane pass occupies residues 605-622 (IVPLMAAAMTSKWVADAL). At 623-816 (GREGIYDAHI…NQDPDSILFN (194 aa)) the chain is on the cytoplasmic side. Y628 lines the chloride pocket. CBS domains follow at residues 656-720 (MKPR…ARKK) and 752-812 (ILDL…DPDS). Residues T666, 687 to 689 (YSG), and 794 to 797 (TKKD) contribute to the ATP site.

This sequence belongs to the chloride channel (TC 2.A.49) family. ClC-5/CLCN5 subfamily. In terms of assembly, interacts with NEDD4 and NEDD4L. Post-translationally, ubiquitinated by NEDD4L in the presence of albumin; which promotes endocytosis and proteasomal degradation. Kidney. Moderately expressed in aortic vascular smooth muscle and endothelial cells, and at a slightly higher level in the coronary vascular smooth muscle.

The protein localises to the golgi apparatus membrane. Its subcellular location is the endosome membrane. The protein resides in the cell membrane. The enzyme catalyses 2 chloride(in) + H(+)(out) = 2 chloride(out) + H(+)(in). Proton-coupled chloride transporter. Functions as antiport system and exchanges chloride ions against protons. Important for normal acidification of the endosome lumen. May play an important role in renal tubular function. The CLC channel family contains both chloride channels and proton-coupled anion transporters that exchange chloride or another anion for protons. The absence of conserved gating glutamate residues is typical for family members that function as channels. The protein is H(+)/Cl(-) exchange transporter 5 of Homo sapiens (Human).